The primary structure comprises 108 residues: Insertion element IS6110 uncharacterized 12.0 kDa protein (108 aa).

This sequence belongs to the transposase 8 family.

The sequence is that of Insertion element IS6110 uncharacterized 12.0 kDa protein from Mycobacterium bovis (strain ATCC BAA-935 / AF2122/97).